Reading from the N-terminus, the 493-residue chain is Probable cytosol aminopeptidase (493 aa).

Positions 259 and 264 each coordinate Mn(2+). K271 is a catalytic residue. 3 residues coordinate Mn(2+): D282, D341, and E343. Residue R345 is part of the active site.

The protein belongs to the peptidase M17 family. It depends on Mn(2+) as a cofactor.

It is found in the cytoplasm. The enzyme catalyses Release of an N-terminal amino acid, Xaa-|-Yaa-, in which Xaa is preferably Leu, but may be other amino acids including Pro although not Arg or Lys, and Yaa may be Pro. Amino acid amides and methyl esters are also readily hydrolyzed, but rates on arylamides are exceedingly low.. The catalysed reaction is Release of an N-terminal amino acid, preferentially leucine, but not glutamic or aspartic acids.. In terms of biological role, presumably involved in the processing and regular turnover of intracellular proteins. Catalyzes the removal of unsubstituted N-terminal amino acids from various peptides. The chain is Probable cytosol aminopeptidase from Bacillus cytotoxicus (strain DSM 22905 / CIP 110041 / 391-98 / NVH 391-98).